Reading from the N-terminus, the 127-residue chain is Aspartate 1-decarboxylase (127 aa).

Residue Ser25 is the Schiff-base intermediate with substrate; via pyruvic acid of the active site. Ser25 is subject to Pyruvic acid (Ser). Thr57 is a substrate binding site. Catalysis depends on Tyr58, which acts as the Proton donor. Residue 73-75 participates in substrate binding; the sequence is GSA.

It belongs to the PanD family. Heterooctamer of four alpha and four beta subunits. Pyruvate is required as a cofactor. In terms of processing, is synthesized initially as an inactive proenzyme, which is activated by self-cleavage at a specific serine bond to produce a beta-subunit with a hydroxyl group at its C-terminus and an alpha-subunit with a pyruvoyl group at its N-terminus.

The protein localises to the cytoplasm. It catalyses the reaction L-aspartate + H(+) = beta-alanine + CO2. It functions in the pathway cofactor biosynthesis; (R)-pantothenate biosynthesis; beta-alanine from L-aspartate: step 1/1. Functionally, catalyzes the pyruvoyl-dependent decarboxylation of aspartate to produce beta-alanine. The protein is Aspartate 1-decarboxylase of Dechloromonas aromatica (strain RCB).